The following is a 140-amino-acid chain: Austinoid biosynthesis clusters protein S (140 aa).

The protein belongs to the trt14 isomerase family. Homodimer.

It functions in the pathway secondary metabolite biosynthesis; terpenoid biosynthesis. Its function is as follows. Part of the gene cluster B that mediates the biosynthesis of austinol and dehydroaustinol, two fungal meroterpenoids. The first step of the pathway is the synthesis of 3,5-dimethylorsellinic acid by the polyketide synthase ausA. 3,5-dimethylorsellinic acid is then prenylated by the polyprenyl transferase ausN. Further epoxidation by the FAD-dependent monooxygenase ausM and cyclization by the probable terpene cyclase ausL lead to the formation of protoaustinoid A. Protoaustinoid A is then oxidized to spiro-lactone preaustinoid A3 by the combined action of the FAD-binding monooxygenases ausB and ausC, and the dioxygenase ausE. Acid-catalyzed keto-rearrangement and ring contraction of the tetraketide portion of preaustinoid A3 by ausJ lead to the formation of preaustinoid A4. The aldo-keto reductase ausK, with the help of ausH, is involved in the next step by transforming preaustinoid A4 into isoaustinone which is in turn hydroxylated by the P450 monooxygenase ausI to form austinolide. Finally, the cytochrome P450 monooxygenase ausG modifies austinolide to austinol. Austinol can be further modified to dehydroaustinol which forms a diffusible complex with diorcinol that initiates conidiation. Due to genetic rearrangements of the clusters and the subsequent loss of some enzymes, the end products of the Emericella nidulans austinoid biosynthesis clusters are austinol and dehydroaustinol, even if additional enzymes, such as the O-acetyltransferase ausQ and the cytochrome P450 monooxygenase ausR are still functional. AusS is necessary for austinoids production and may play a possible function as a regulator. This chain is Austinoid biosynthesis clusters protein S, found in Emericella nidulans (strain FGSC A4 / ATCC 38163 / CBS 112.46 / NRRL 194 / M139) (Aspergillus nidulans).